The primary structure comprises 301 residues: Sulfate adenylyltransferase subunit 2 (301 aa).

The interval R279–F301 is disordered.

This sequence belongs to the PAPS reductase family. CysD subfamily. In terms of assembly, sulfate-activating enzymes, NodP and NodQ, may be physically associated.

The enzyme catalyses sulfate + ATP + H(+) = adenosine 5'-phosphosulfate + diphosphate. Functionally, proposed to provide activated sulfate for transfer to nod factor. The chain is Sulfate adenylyltransferase subunit 2 (nodP) from Rhizobium sp. (strain N33).